A 328-amino-acid chain; its full sequence is Ferredoxin--NADP reductase (328 aa).

Glutamate 36, glutamine 44, tyrosine 49, valine 89, phenylalanine 123, aspartate 284, and threonine 324 together coordinate FAD.

It belongs to the ferredoxin--NADP reductase type 2 family. Homodimer. It depends on FAD as a cofactor.

It carries out the reaction 2 reduced [2Fe-2S]-[ferredoxin] + NADP(+) + H(+) = 2 oxidized [2Fe-2S]-[ferredoxin] + NADPH. The chain is Ferredoxin--NADP reductase from Lacticaseibacillus paracasei (strain ATCC 334 / BCRC 17002 / CCUG 31169 / CIP 107868 / KCTC 3260 / NRRL B-441) (Lactobacillus paracasei).